Consider the following 75-residue polypeptide: Large ribosomal subunit protein bL31 (75 aa).

Belongs to the bacterial ribosomal protein bL31 family. Type A subfamily. Part of the 50S ribosomal subunit.

Functionally, binds the 23S rRNA. This is Large ribosomal subunit protein bL31 from Chlorobaculum tepidum (strain ATCC 49652 / DSM 12025 / NBRC 103806 / TLS) (Chlorobium tepidum).